We begin with the raw amino-acid sequence, 143 residues long: Large ribosomal subunit protein uL15 (143 aa).

The disordered stretch occupies residues 1–59 (MELNTITPGQGAKHAKRRVGRGIGSGLGKTAGRGHKGQKSRSGGYHKVGFEGGQMPMQR). The span at 21–31 (RGIGSGLGKTA) shows a compositional bias: gly residues.

Belongs to the universal ribosomal protein uL15 family. Part of the 50S ribosomal subunit.

Binds to the 23S rRNA. The sequence is that of Large ribosomal subunit protein uL15 from Polaromonas naphthalenivorans (strain CJ2).